We begin with the raw amino-acid sequence, 108 residues long: Replication initiation control protein YabA (108 aa).

Zn(2+) is bound by residues His83, Cys85, Cys99, and Cys102.

This sequence belongs to the YabA family. Homotetramer. Interacts with both DnaA and DnaN, acting as a bridge between these two proteins. Requires Zn(2+) as cofactor.

It localises to the cytoplasm. It is found in the nucleoid. In terms of biological role, involved in control of chromosome replication initiation. Inhibits the cooperative binding of DnaA to the oriC region, thus negatively regulating initiation of chromosome replication. Inhibits the ability of DnaA-ATP to form a helix on DNA; does not disassemble preformed DnaA-DNA helices. Decreases the residence time of DnaA on the chromosome at its binding sites (oriC, replication forks and promoter-binding sites). Tethers DnaA to the replication machinery via the DNA polymerase beta sliding clamp subunit (dnaN). Associates with oriC and other DnaA targets on the chromosome in a DnaA-dependent manner. In Lactococcus lactis subsp. cremoris (strain SK11), this protein is Replication initiation control protein YabA.